A 365-amino-acid chain; its full sequence is Glucan endo-1,3-beta-glucosidase, basic vacuolar isoform (365 aa).

Residues 1–32 (MSTLHKHNTPQMAAITLLGLLLVASSIEIAGA) form the signal peptide. Glu128 functions as the Proton donor in the catalytic mechanism. The active-site Nucleophile is Glu273. Residues 349 to 365 (VSGSVETNATASLISEI) constitute a propeptide, removed in mature form. Asn356 carries an N-linked (GlcNAc...) asparagine glycan.

This sequence belongs to the glycosyl hydrolase 17 family.

Its subcellular location is the vacuole. It catalyses the reaction Hydrolysis of (1-&gt;3)-beta-D-glucosidic linkages in (1-&gt;3)-beta-D-glucans.. In terms of biological role, implicated in the defense of plants against pathogens. The polypeptide is Glucan endo-1,3-beta-glucosidase, basic vacuolar isoform (GN2) (Nicotiana plumbaginifolia (Leadwort-leaved tobacco)).